Here is a 556-residue protein sequence, read N- to C-terminus: DNA ligase B (556 aa).

Lys126 (N6-AMP-lysine intermediate) is an active-site residue.

It belongs to the NAD-dependent DNA ligase family. LigB subfamily.

The enzyme catalyses NAD(+) + (deoxyribonucleotide)n-3'-hydroxyl + 5'-phospho-(deoxyribonucleotide)m = (deoxyribonucleotide)n+m + AMP + beta-nicotinamide D-nucleotide.. In terms of biological role, catalyzes the formation of phosphodiester linkages between 5'-phosphoryl and 3'-hydroxyl groups in double-stranded DNA using NAD as a coenzyme and as the energy source for the reaction. The protein is DNA ligase B of Stutzerimonas stutzeri (strain A1501) (Pseudomonas stutzeri).